A 241-amino-acid chain; its full sequence is Megakaryocyte and platelet inhibitory receptor G6b (241 aa).

The N-terminal stretch at 1–17 is a signal peptide; the sequence is MAVFLQLLPLLLSRAQG. Residues 18–142 lie on the Extracellular side of the membrane; sequence NPGASLDGRP…GPTHGSVYPQ (125 aa). Residue Asn32 is glycosylated (N-linked (GlcNAc...) asparagine). A helical transmembrane segment spans residues 143-163; it reads LLIPLLGAGLVLGLGALGLVW. Residues 164–241 lie on the Cytoplasmic side of the membrane; the sequence is WLHRRLPPQP…DASTIYAVVV (78 aa). 2 consecutive short sequence motifs (ITIM motif) follow at residues 209–214 and 235–240; these read LLYADL and TIYAVV. Tyr211 carries the phosphotyrosine modification.

Interacts (via ITIM motif) with PTPN6 and PTPN11. Binds to heparin. All isoforms are N-glycosylated. Post-translationally, isoform E is O-glycosylated. In terms of processing, phosphorylated. Expressed in platelets. Expressed in a restricted set of hematopoietic cell lines including the erythroleukemia cell line K-562 and the T-cell leukemia cell lines MOLT-4 and Jurkat. Not detected in the monocyte-like cell line U-937, the B-cell-like cell line Raji, the fibroblast cell lines TK and HeLa, or the natural killer cell lines NKL, NK 62 and YT.

The protein resides in the endoplasmic reticulum. It is found in the golgi apparatus. The protein localises to the cell membrane. Its function is as follows. Inhibitory receptor that acts as a critical regulator of hematopoietic lineage differentiation, megakaryocyte function and platelet production. Inhibits platelet aggregation and activation by agonists such as ADP and collagen-related peptide. This regulation of megakaryocate function as well as platelet production ann activation is done through the inhibition (via the 2 ITIM motifs) of the receptors CLEC1B and GP6:FcRgamma signaling. Appears to operate in a calcium-independent manner. In terms of biological role, isoform B, displayed in this entry, is the only isoform to contain both a transmembrane region and 2 immunoreceptor tyrosine-based inhibitor motifs (ITIMs) and, thus, the only one which probably has a role of inhibitory receptor. Isoform A may be the activating counterpart of isoform B. The protein is Megakaryocyte and platelet inhibitory receptor G6b of Homo sapiens (Human).